The following is a 295-amino-acid chain: G1/S-specific cyclin-D1 (295 aa).

Residues 28–152 (LRAMLKAEET…LLVNKLKWNL (125 aa)) form the Cyclin N-terminal domain. The tract at residues 264-295 (QQSLDPKAAEEEEEEEEADLACTPTDVRDVNI) is disordered. A Glycyl lysine isopeptide (Lys-Gly) (interchain with G-Cter in ubiquitin) cross-link involves residue lysine 270. Residues 273–282 (EEEEEEEEAD) are compositionally biased toward acidic residues. Threonine 286 carries the post-translational modification Phosphothreonine.

This sequence belongs to the cyclin family. Cyclin D subfamily. Interacts with either CDK4 or CDK6 protein kinase to form a serine/threonine kinase holoenzyme complex. The cyclin subunit imparts substrate specificity to the complex. Component of the ternary complex CCND1/CDK4/CDKN1B required for nuclear translocation and modulation of CDK4-mediated kinase activity. Interacts directly with CDKN1B. Can form similar complexes with either CDKN1A or CDKN2A. Interacts with UHRF2; the interaction ubiquitinates CCND1 and appears to occur independently of phosphorylation. Interacts with USP2. Interacts (via cyclin N-terminal domain) with INSM1 (via N-terminal region); the interaction competes with the binding of CCND1 to CDK4 during cell cycle progression and inhibits CDK4 activity. Interacts with CDK4; the interaction is prevented with the binding of CCND1 to INSM1 during cell cycle progression. Phosphorylation at Thr-286 by MAP kinases is required for ubiquitination and degradation by the DCX(AMBRA1) complex. It also plays an essential role for recognition by the FBXO31 component of SCF (SKP1-cullin-F-box) protein ligase complex following DNA damage. In terms of processing, ubiquitinated at Lys-270 by the DCX(AMBRA1) complex during the transition from G1 to S cell phase, leading to its degradation: ubiquitination is dependent on Thr-286 phosphorylation. The DCX(AMBRA1) complex represents the major regulator of CCND1 stability during the G1/S transition. Also ubiquitinated by the SCF(FBXO4) and Cul7-RING(FBXW8) ubiquitin-protein ligase complexes. Following DNA damage it is ubiquitinated by the SCF(FBXO31) protein ligase complex. SCF(FBXO31) ubiquitination is dependent on Thr-286 phosphorylation. Ubiquitinated also by UHRF2 apparently in a phosphorylation-independent manner. Ubiquitination leads to its degradation and G1 arrest. Deubiquitinated by USP2; leading to its stabilization.

The protein localises to the nucleus. The protein resides in the cytoplasm. It is found in the nucleus membrane. In terms of biological role, regulatory component of the cyclin D1-CDK4 (DC) complex that phosphorylates and inhibits members of the retinoblastoma (RB) protein family including RB1 and regulates the cell-cycle during G(1)/S transition. Phosphorylation of RB1 allows dissociation of the transcription factor E2F from the RB/E2F complex and the subsequent transcription of E2F target genes which are responsible for the progression through the G(1) phase. Hypophosphorylates RB1 in early G(1) phase. Cyclin D-CDK4 complexes are major integrators of various mitogenenic and antimitogenic signals. Also a substrate for SMAD3, phosphorylating SMAD3 in a cell-cycle-dependent manner and repressing its transcriptional activity. Component of the ternary complex, cyclin D1/CDK4/CDKN1B, required for nuclear translocation and activity of the cyclin D-CDK4 complex. Exhibits transcriptional corepressor activity with INSM1 on the NEUROD1 and INS promoters in a cell cycle-independent manner. This is G1/S-specific cyclin-D1 (CCND1) from Canis lupus familiaris (Dog).